The sequence spans 56 residues: Small ribosomal subunit protein uS14 (56 aa).

The Zn(2+) site is built by cysteine 21, cysteine 24, cysteine 39, and cysteine 42.

It belongs to the universal ribosomal protein uS14 family. Component of the 40S small ribosomal subunit. The cofactor is Zn(2+).

It is found in the cytoplasm. Its subcellular location is the cytosol. The protein resides in the rough endoplasmic reticulum. In Lysiphlebus testaceipes (Greenbugs aphid parastoid), this protein is Small ribosomal subunit protein uS14 (RpS29).